A 384-amino-acid polypeptide reads, in one-letter code: Cytochrome b (384 aa).

4 helical membrane-spanning segments follow: residues 33-53 (YGSL…FLAM), 77-98 (WLIR…YLHI), 113-133 (WNVG…GYVL), and 178-198 (FFAF…IHLL). Heme b contacts are provided by His83 and His97. Residues His182 and His196 each contribute to the heme b site. His201 provides a ligand contact to a ubiquinone. 4 helical membrane passes run 226–246 (YKDL…ALFT), 288–308 (LGGV…PILH), 320–340 (LSQM…WIGG), and 347–367 (FIII…VLMP).

This sequence belongs to the cytochrome b family. In terms of assembly, the cytochrome bc1 complex contains 3 respiratory subunits (MT-CYB, CYC1 and UQCRFS1), 2 core proteins (UQCRC1 and UQCRC2) and probably 6 low-molecular weight proteins. The cofactor is heme b.

The protein resides in the mitochondrion inner membrane. In terms of biological role, component of the ubiquinol-cytochrome c reductase complex (complex III or cytochrome b-c1 complex) that is part of the mitochondrial respiratory chain. The b-c1 complex mediates electron transfer from ubiquinol to cytochrome c. Contributes to the generation of a proton gradient across the mitochondrial membrane that is then used for ATP synthesis. The protein is Cytochrome b (mt-cyb) of Anoplogaster cornuta (Common fangtooth).